We begin with the raw amino-acid sequence, 407 residues long: uncharacterized protein (407 aa).

Disordered stretches follow at residues 73–93 and 116–202; these read SPHS…VHGG and SGSI…IKPS. 5 consecutive repeat copies span residues 112-116, 117-121, 122-126, 127-131, and 132-136. The 5 X 5 AA tandem repeats of G-[S]-[IV]-R-[DNS] stretch occupies residues 112 to 136; that stretch reads GSIRSGSIRSGSIRNGSIRSGSVRD. Residues 116-132 are compositionally biased toward low complexity; it reads SGSIRSGSIRNGSIRSG. Positions 187–202 are enriched in basic and acidic residues; the sequence is NHYAESEYSEKSIKPS.

Belongs to the asfivirus B407L family.

This is an uncharacterized protein from Ornithodoros (relapsing fever ticks).